Here is a 316-residue protein sequence, read N- to C-terminus: 4-diphosphocytidyl-2-C-methyl-D-erythritol kinase (316 aa).

K11 is an active-site residue. Position 99–109 (99–109 (PVAAGLAGGST)) interacts with ATP. D141 is a catalytic residue.

This sequence belongs to the GHMP kinase family. IspE subfamily.

The catalysed reaction is 4-CDP-2-C-methyl-D-erythritol + ATP = 4-CDP-2-C-methyl-D-erythritol 2-phosphate + ADP + H(+). It functions in the pathway isoprenoid biosynthesis; isopentenyl diphosphate biosynthesis via DXP pathway; isopentenyl diphosphate from 1-deoxy-D-xylulose 5-phosphate: step 3/6. Functionally, catalyzes the phosphorylation of the position 2 hydroxy group of 4-diphosphocytidyl-2C-methyl-D-erythritol. This Gloeothece citriformis (strain PCC 7424) (Cyanothece sp. (strain PCC 7424)) protein is 4-diphosphocytidyl-2-C-methyl-D-erythritol kinase.